A 176-amino-acid polypeptide reads, in one-letter code: NAD(P)H-quinone oxidoreductase subunit 6, chloroplastic (176 aa).

The next 5 helical transmembrane spans lie at 10–30 (FLLV…VFLP), 33–53 (IYSA…YILL), 61–81 (AQLL…VMFM), 92–112 (LWTV…ISLI), and 153–173 (FLPF…AIAI).

The protein belongs to the complex I subunit 6 family. As to quaternary structure, NDH is composed of at least 16 different subunits, 5 of which are encoded in the nucleus.

The protein localises to the plastid. It localises to the chloroplast thylakoid membrane. It catalyses the reaction a plastoquinone + NADH + (n+1) H(+)(in) = a plastoquinol + NAD(+) + n H(+)(out). The enzyme catalyses a plastoquinone + NADPH + (n+1) H(+)(in) = a plastoquinol + NADP(+) + n H(+)(out). Functionally, NDH shuttles electrons from NAD(P)H:plastoquinone, via FMN and iron-sulfur (Fe-S) centers, to quinones in the photosynthetic chain and possibly in a chloroplast respiratory chain. The immediate electron acceptor for the enzyme in this species is believed to be plastoquinone. Couples the redox reaction to proton translocation, and thus conserves the redox energy in a proton gradient. The polypeptide is NAD(P)H-quinone oxidoreductase subunit 6, chloroplastic (ndhG) (Jasminum nudiflorum (Winter jasmine)).